We begin with the raw amino-acid sequence, 170 residues long: Peptide methionine sulfoxide reductase MsrA (170 aa).

The active site involves C14.

The protein belongs to the MsrA Met sulfoxide reductase family.

It catalyses the reaction L-methionyl-[protein] + [thioredoxin]-disulfide + H2O = L-methionyl-(S)-S-oxide-[protein] + [thioredoxin]-dithiol. The enzyme catalyses [thioredoxin]-disulfide + L-methionine + H2O = L-methionine (S)-S-oxide + [thioredoxin]-dithiol. Its function is as follows. Has an important function as a repair enzyme for proteins that have been inactivated by oxidation. Catalyzes the reversible oxidation-reduction of methionine sulfoxide in proteins to methionine. This chain is Peptide methionine sulfoxide reductase MsrA, found in Streptomyces avermitilis (strain ATCC 31267 / DSM 46492 / JCM 5070 / NBRC 14893 / NCIMB 12804 / NRRL 8165 / MA-4680).